A 127-amino-acid polypeptide reads, in one-letter code: Large ribosomal subunit protein bL17 (127 aa).

This sequence belongs to the bacterial ribosomal protein bL17 family. Part of the 50S ribosomal subunit. Contacts protein L32.

In Haemophilus ducreyi (strain 35000HP / ATCC 700724), this protein is Large ribosomal subunit protein bL17.